The primary structure comprises 668 residues: MSNKAVVFAYHDIGCAGIEALLNAGYEIAAVFTHADDPKENTFYGSVAQLCARKGIAVHAPEDANHPLWIERIAKLNPDYLFSFYYRNLLSEPLLATASKGAFNLHGSLLPRYRGRAPANWVLVKGETETGVTLHRMVKRADAGAIIAQERVAIERSDTALSLHHKLRDAAASLLRDTLPALAQGKITETAQDESKASYFGRRTAADGKIDWQRPAEELFNLVRAVTQPYPGAFCAVGEHKLIVWSAEVAKGNEGQAPGRVISVDPLRIACGQDSLVITSGQRNANGLFLGGPQLANELGLVDGSLLRGAESGRKPRRTRVLILGVNGFIGNHLSERLLRDDKYDVYGLDIGSDAIERLRSHPNFHFVEGDISIHSEWIEYHIKKCDVVLPLVAIATPIEYTRNPLRVFELDFEENLKLVRYCVKYNKRVIFPSTSEVYGMCQDKNFDEDTSNLIVGPINKQRWIYSVSKQLLDRVIWAYGAKGLNFTLFRPFNWMGPRLDRLDSARIGSSRAITQLILNLVEGTPIRLFDGGEQKRCFTDIADGIEALARIVDNENDCCNGQIINIGNPDNEASIRQLGEELLRQFEAHPLRGNFPPFAGFRDVESKAFYGAGYQDVEHRKPSIDNAKRLLNWEPTVEMSETIGNTLDFFLREAMLEIADRAKQEAR.

Residues 1–307 (MSNKAVVFAY…ELGLVDGSLL (307 aa)) form a formyltransferase ArnAFT region. Residue His-106 is the Proton donor; for formyltransferase activity of the active site. (6R)-10-formyltetrahydrofolate is bound by residues Arg-116 and 138-142 (VKRAD). The interval 317-668 (RRTRVLILGV…IADRAKQEAR (352 aa)) is dehydrogenase ArnADH. Residues Asp-350 and 371–372 (DI) each bind NAD(+). UDP-alpha-D-glucuronate contacts are provided by residues Ala-396, Tyr-401, and 435–436 (TS). Glu-437 acts as the Proton acceptor; for decarboxylase activity in catalysis. UDP-alpha-D-glucuronate is bound by residues Arg-463, Asn-494, 528 to 537 (RLFDGGEQKR), and Tyr-615. Arg-621 serves as the catalytic Proton donor; for decarboxylase activity.

The protein in the N-terminal section; belongs to the Fmt family. UDP-L-Ara4N formyltransferase subfamily. In the C-terminal section; belongs to the NAD(P)-dependent epimerase/dehydratase family. UDP-glucuronic acid decarboxylase subfamily. As to quaternary structure, homohexamer, formed by a dimer of trimers.

It carries out the reaction UDP-alpha-D-glucuronate + NAD(+) = UDP-beta-L-threo-pentopyranos-4-ulose + CO2 + NADH. The enzyme catalyses UDP-4-amino-4-deoxy-beta-L-arabinose + (6R)-10-formyltetrahydrofolate = UDP-4-deoxy-4-formamido-beta-L-arabinose + (6S)-5,6,7,8-tetrahydrofolate + H(+). Its pathway is nucleotide-sugar biosynthesis; UDP-4-deoxy-4-formamido-beta-L-arabinose biosynthesis; UDP-4-deoxy-4-formamido-beta-L-arabinose from UDP-alpha-D-glucuronate: step 1/3. It functions in the pathway nucleotide-sugar biosynthesis; UDP-4-deoxy-4-formamido-beta-L-arabinose biosynthesis; UDP-4-deoxy-4-formamido-beta-L-arabinose from UDP-alpha-D-glucuronate: step 3/3. It participates in bacterial outer membrane biogenesis; lipopolysaccharide biosynthesis. Functionally, bifunctional enzyme that catalyzes the oxidative decarboxylation of UDP-glucuronic acid (UDP-GlcUA) to UDP-4-keto-arabinose (UDP-Ara4O) and the addition of a formyl group to UDP-4-amino-4-deoxy-L-arabinose (UDP-L-Ara4N) to form UDP-L-4-formamido-arabinose (UDP-L-Ara4FN). The modified arabinose is attached to lipid A and is required for resistance to polymyxin and cationic antimicrobial peptides. This is Bifunctional polymyxin resistance protein ArnA from Pseudomonas fluorescens (strain ATCC BAA-477 / NRRL B-23932 / Pf-5).